The primary structure comprises 296 residues: Tyrosine recombinase XerC (296 aa).

One can recognise a Core-binding (CB) domain in the interval Met-1–Met-84. The Tyr recombinase domain maps to Tyr-105–Leu-286. Active-site residues include Arg-145, Lys-169, His-238, Arg-241, and His-264. Tyr-273 (O-(3'-phospho-DNA)-tyrosine intermediate) is an active-site residue.

Belongs to the 'phage' integrase family. XerC subfamily. In terms of assembly, forms a cyclic heterotetrameric complex composed of two molecules of XerC and two molecules of XerD.

The protein localises to the cytoplasm. Functionally, site-specific tyrosine recombinase, which acts by catalyzing the cutting and rejoining of the recombining DNA molecules. The XerC-XerD complex is essential to convert dimers of the bacterial chromosome into monomers to permit their segregation at cell division. It also contributes to the segregational stability of plasmids. This chain is Tyrosine recombinase XerC, found in Staphylococcus epidermidis (strain ATCC 35984 / DSM 28319 / BCRC 17069 / CCUG 31568 / BM 3577 / RP62A).